The chain runs to 291 residues: AA14 family lytic polysaccharide monooxygenase (291 aa).

The first 17 residues, 1 to 17, serve as a signal peptide directing secretion; that stretch reads MLTTAILFTSLAGSAYA. N141 carries N-linked (GlcNAc...) asparagine glycosylation. Intrachain disulfides connect C192-C197, C199-C220, and C240-C247.

This sequence belongs to the polysaccharide monooxygenase AA14 family. It depends on Cu(2+) as a cofactor.

It localises to the secreted. In terms of biological role, lytic polysaccharide monooxygenase (LPMO) that is active against heteroxylan, xyloglucan and cellulose in beta-cellulose and released native oligosaccharides and corresponding C1- and/or C4-oxidized products. May act mainly on heteroxylan with numerous arabinosyl substituents between cellulose fibers rather than on recalcitrant xylan tightly associated with cellulose. Catalysis by LPMOs requires the reduction of the active-site copper from Cu(II) to Cu(I) by a reducing agent and H(2)O(2) or O(2) as a cosubstrate. Shows a branched chain preference, and has synergistic effects with the Penicillium parvum debranching enzyme ABF62C in an enzyme- and ascorbic acid-dependent manner. Also has synergistic effects with the Penicillium parvum GH10 endoxylanase XYN1, and the degree of synergy was greater with step-by-step addition than with simultaneous addition. The polypeptide is AA14 family lytic polysaccharide monooxygenase (Sordaria brevicollis).